Reading from the N-terminus, the 799-residue chain is MRFSPTFFLLSQLRLTRRRAATSSRFYAVSALNNPNNLSDSEQQQVNHLNLSKLTQHGLQRLLNSTRDDPNLALSFLRQLKEHGVSPNVNAYATLVRILTTWGLDIKLDSVLVELIKNEERGFTVMDLIEVIGEQAEEKKRSFVLIRVSGALVKAYVSLGMFDEATDVLFQSKRLDCVVDIKACNFLMNRMTEFGKIGMLMTLFKQLKQLGLCANEYTYAIVVKALCRKGNLEEAAMLLIENESVFGYKTFINGLCVTGETEKAVALILELIDRKYLAGDDLRAVLGMVVRGFCNEMKMKAAESVIIEMEEIGFGLDVYACLAVIDRYCKNMNLPEALGFLDKMLGKGLKVNCVIVSLILQCYCKMDMCLEALEKFKEFRDMNIFLDRVCYNVAFDALSKLGRVEEAFELLQEMKDRGIVPDVINYTTLIDGYCLQGKVVDALDLIDEMIGNGMSPDLITYNVLVSGLARNGHEEEVLEIYERMKAEGPKPNAVTNSVIIEGLCFARKVKEAEDFFSSLEQKCPENKASFVKGYCEAGLSKKAYKAFVRLEYPLRKSVYIKLFFSLCIEGYLEKAHDVLKKMSAYRVEPGRSMCGKMIGAFCKLNNVREAQVLFDTMVERGLIPDLFTYTIMIHTYCRLNELQKAESLFEDMKQRGIKPDVVTYTVLLDRYLKLDPEHHETCSVQGEVGKRKASEVLREFSAAGIGLDVVCYTVLIDRQCKMNNLEQAAELFDRMIDSGLEPDMVAYTTLISSYFRKGYIDMAVTLVTELSKKYNIPSESFEAAVKSAALKAKRFQYGE.

A mitochondrion-targeting transit peptide spans 1-27; the sequence is MRFSPTFFLLSQLRLTRRRAATSSRFY. PPR repeat units follow at residues 145–179, 180–214, 215–250, 251–278, 282–316, 317–351, 352–386, 387–421, 422–456, 457–491, 492–522, 523–553, 555–589, 590–624, 625–659, 660–695, 708–742, and 743–777; these read LIRV…DCVV, DIKA…GLCA, NEYT…GYKT, FING…KYLA, LRAV…GFGL, DVYA…GLKV, NCVI…NIFL, DRVC…GIVP, DVIN…GMSP, DLIT…GPKP, NAVT…LEQK, CPEN…LEYP, RKSV…RVEP, GRSM…GLIP, DLFT…GIKP, DVVT…KASE, DVVC…GLEP, and DMVA…YNIP.

It belongs to the PPR family. P subfamily.

It localises to the mitochondrion. The chain is Pentatricopeptide repeat-containing protein At2g26790, mitochondrial from Arabidopsis thaliana (Mouse-ear cress).